We begin with the raw amino-acid sequence, 355 residues long: MGCTVSAEDKAAAERSKMIDKNLREDGEKAAREVKLLLLGAGESGKSTIVKQMKIIHEDGYSEEECRQYRAVVYSNTIQSIMAIVKAMGNLQIDFDDPSRADDARQLFALSCTAEEQGVLPEDLSCVIRRLWADNGVQACFGRSREYQLNDSAAYYLNDLERIAQSDYIPTQQDVLRTRVKTTGIVETHFTFKDLHFKMFDVGGQRSERKKWIHCFEGVTAIIFCVALSAYDLVLAEDEEMNRMHESMKLFDSICNNKWFTDTSIILFLNKKDLFEEKITHSPLTICFPEYTGANKYEEAASYIQSKFEDLNKRKDTKEIYTHFTCATDTKNVQFVFDAVTDVIIKNNLKDCGLF.

Glycine 2 carries N-myristoyl glycine lipidation. Residue cysteine 3 is the site of S-palmitoyl cysteine attachment. The 324-residue stretch at 32–355 (REVKLLLLGA…KNNLKDCGLF (324 aa)) folds into the G-alpha domain. Residues 35–48 (KLLLLGAGESGKST) are G1 motif. Residues 40-47 (GAGESGKS), 176-182 (LRTRVKT), 201-205 (DVGGQ), 270-273 (NKKD), and alanine 327 each bind GTP. Serine 47 and threonine 182 together coordinate Mg(2+). Positions 174 to 182 (DVLRTRVKT) are G2 motif. A G3 motif region spans residues 197–206 (FKMFDVGGQR). Residues 266–273 (ILFLNKKD) are G4 motif. Residues 325–330 (TCATDT) form a G5 motif region.

The protein belongs to the G-alpha family. G(i/o/t/z) subfamily. As to quaternary structure, g proteins are composed of 3 units; alpha, beta and gamma. The alpha chain contains the guanine nucleotide binding site. In this context, interacts with GNB2. Interacts with UNC5B. Interacts with GPSM1. Interacts with RGS12 and RGS14. Interacts (inactive GDP-bound form) with NUCB1 (via GBA motif); the interaction leads to activation of GNAI3. Interacts (inactive GDP-bound form) with CCDC88C/DAPLE (via GBA motif). Interacts (inactive GDP-bound form) with CCDC8A/GIV (via GBA motif). Interacts with CXCR1 and CXCR2.

It is found in the cytoplasm. The protein localises to the cytoskeleton. It localises to the microtubule organizing center. Its subcellular location is the centrosome. The protein resides in the cell membrane. It is found in the membrane. In terms of biological role, guanine nucleotide-binding proteins (G proteins) are involved as modulators or transducers in various transmembrane signaling systems. The G(i) proteins are involved in hormonal regulation of adenylate cyclase: they inhibit the cyclase in response to beta-adrenergic stimuli. May play a role in cell division. In Canis lupus familiaris (Dog), this protein is Guanine nucleotide-binding protein G(i) subunit alpha-2 (GNAI2).